The following is a 339-amino-acid chain: MESNDLNKESLENWNESWDLVMTFGMGHLTSKLFNILMNNSIFDMINESPKHYKEIAKIINFNEFSCYRLLRYFVPYGLFEENNEIFSITNKSKKLIKSGGIYNLCTFFSSNDYFKLYSTIPESFEQNKNLGPSSFGFDDFWDIVKTNEHFKYSFNQEMREFSNLSIPTIIKNTDFSSFNTVVDVGGSHGRIVGELVKKYENLNGIVFDLETVINSSIEKIKHPRIEYVSGSFFESVPSADCYVLKNILHDWDDEKCLEILKTISKSMKENSKIFIFDEIIDPNDYRKLSLFLDVTVFHFFNSRERSLNDWKQLCDKSDFKIDSINNVTQPQLLILSKK.

S-adenosyl-L-methionine-binding residues include G186, D209, S232, F233, and K246. H250 serves as the catalytic Proton acceptor.

The protein belongs to the class I-like SAM-binding methyltransferase superfamily. Cation-independent O-methyltransferase family. COMT subfamily.

It carries out the reaction (3,5-dichloro-2,4,6-trihydroxyphenyl)hexan-1-one + S-adenosyl-L-methionine = 1-(3,5-dichloro-2,6-dihydroxy-4-methoxyphenyl)hexan-1-one + S-adenosyl-L-homocysteine + H(+). This chain is O-methyltransferase 7 (omt7), found in Dictyostelium discoideum (Social amoeba).